We begin with the raw amino-acid sequence, 409 residues long: Dihydroorotase (409 aa).

The Zn(2+) site is built by histidine 57 and histidine 59. Substrate is bound by residues 59–61 (HLR) and asparagine 91. Positions 139, 168, 208, and 276 each coordinate Zn(2+). N6-carboxylysine is present on lysine 139. The active site involves aspartate 276. Substrate is bound by residues histidine 280 and 290-291 (AG).

It belongs to the metallo-dependent hydrolases superfamily. DHOase family. Class I DHOase subfamily. The cofactor is Zn(2+).

It catalyses the reaction (S)-dihydroorotate + H2O = N-carbamoyl-L-aspartate + H(+). It functions in the pathway pyrimidine metabolism; UMP biosynthesis via de novo pathway; (S)-dihydroorotate from bicarbonate: step 3/3. Its function is as follows. Catalyzes the reversible cyclization of carbamoyl aspartate to dihydroorotate. This chain is Dihydroorotase, found in Thermococcus kodakarensis (strain ATCC BAA-918 / JCM 12380 / KOD1) (Pyrococcus kodakaraensis (strain KOD1)).